An 805-amino-acid chain; its full sequence is Ribosome biogenesis protein ERB1 (805 aa).

The interval 1 to 105 (MVKGRKSQKA…SDFSEDDTKS (105 aa)) is disordered. Over residues 8–22 (QKADKVTKAKKRVAD) the composition is skewed to basic and acidic residues. The span at 23 to 75 (EVDESESEPELQVEGLIDAEAESEDDESFESAEENASAEEDEEDEEDEEDSDA) shows a compositional bias: acidic residues. A required for interaction with NOP7 region spans residues 264-382 (RFVPSKNEAK…LRKVPGYTES (119 aa)). The interval 382 to 418 (SVRERFERSLDLYLAPRMRKNKLNIDPESLIPELPSP) is required for interaction with YTM1. 7 WD repeats span residues 434–473 (GHEG…EVYR), 482–522 (NPED…YDIE), 590–632 (VCKK…TQSP), 635–673 (KSKG…LVKK), 676–715 (PGAR…TPYK), 719–758 (YHDK…DMMK), and 775–805 (GHLG…MWTT).

This sequence belongs to the WD repeat BOP1/ERB1 family. In terms of assembly, component of the NOP7 complex, composed of ERB1, NOP7 and YTM1. The complex is held together by ERB1, which interacts with NOP7 via its N-terminal domain and with YTM1 via a high-affinity interaction between the seven-bladed beta-propeller domains of the 2 proteins. The NOP7 complex associates with the 66S pre-ribosome.

It is found in the nucleus. It localises to the nucleolus. Its subcellular location is the nucleoplasm. Functionally, component of the NOP7 complex, which is required for maturation of the 25S and 5.8S ribosomal RNAs and formation of the 60S ribosome. The protein is Ribosome biogenesis protein ERB1 of Candida glabrata (strain ATCC 2001 / BCRC 20586 / JCM 3761 / NBRC 0622 / NRRL Y-65 / CBS 138) (Yeast).